The following is a 274-amino-acid chain: Nitrogenase iron protein (274 aa).

8-15 contributes to the ATP binding site; it reads GKGGIGKS. Position 94 (cysteine 94) interacts with [4Fe-4S] cluster. Arginine 97 carries the post-translational modification ADP-ribosylarginine; by dinitrogenase reductase ADP-ribosyltransferase. Cysteine 131 provides a ligand contact to [4Fe-4S] cluster.

This sequence belongs to the NifH/BchL/ChlL family. As to quaternary structure, homodimer. [4Fe-4S] cluster is required as a cofactor. Post-translationally, the reversible ADP-ribosylation of Arg-97 inactivates the nitrogenase reductase and regulates nitrogenase activity.

The catalysed reaction is N2 + 8 reduced [2Fe-2S]-[ferredoxin] + 16 ATP + 16 H2O = H2 + 8 oxidized [2Fe-2S]-[ferredoxin] + 2 NH4(+) + 16 ADP + 16 phosphate + 6 H(+). In terms of biological role, the key enzymatic reactions in nitrogen fixation are catalyzed by the nitrogenase complex, which has 2 components: the iron protein and the molybdenum-iron protein. In Desulfatibacillum aliphaticivorans, this protein is Nitrogenase iron protein.